The chain runs to 460 residues: MSLANRIEEIRCLCQYKLWNDLPSYGEDENVPQNIRRCYQLLDMTSRSFAVVIKELPNGIREAVMIFYLVLRGLDTVEDDMTLPLDKKLPILRDFYKTIEVEGWTFNESGPNEKDRQLLVEFDVVIKEYLNLSEGYRNVISNITKEMGDGMAYYASLAEKNDGFSVETIEDFNKYCHYVAGLVGIGLSRLFAQSKLEDPDLAHSQAISNSLGLFLQKVNIIRDYREDFDDNRHFWPREIWSKYTSSFGDLCLPDNSEKALECLSDMTANALTHATDALVYLSQLKTQEIFNFCAIPQVMAIATLAAVFRNPDVFQTNVKIRKGQAVQIILHSVNLKNVCDLFLRYTRDIHYKNTPKDPNFLKISIECGKIEQVSESLFPRRFREMYEKAYVSKLSEQKKGNGTQKAILNDEQKELYRKDLQKLGISILFVFFIILVCLAVIFYVFNIRIHWSDFKELNLF.

The chain crosses the membrane as a helical span at residues 425 to 445 (ISILFVFFIILVCLAVIFYVF).

This sequence belongs to the phytoene/squalene synthase family. As to quaternary structure, interacts with pof14. The cofactor is Mg(2+).

It is found in the endoplasmic reticulum membrane. It catalyses the reaction 2 (2E,6E)-farnesyl diphosphate + NADPH + H(+) = squalene + 2 diphosphate + NADP(+). The enzyme catalyses 2 (2E,6E)-farnesyl diphosphate + NADH + H(+) = squalene + 2 diphosphate + NAD(+). It participates in terpene metabolism; lanosterol biosynthesis; lanosterol from farnesyl diphosphate: step 1/3. It functions in the pathway steroid metabolism; ergosterol biosynthesis. Squalene synthase; part of the third module of ergosterol biosynthesis pathway that includes by the late steps of the pathway. Erg9 produces squalene from 2 farnesyl pyrophosphate moieties. The third module or late pathway involves the ergosterol synthesis itself through consecutive reactions that mainly occur in the endoplasmic reticulum (ER) membrane. Firstly, the squalene synthase erg9 catalyzes the condensation of 2 farnesyl pyrophosphate moieties to form squalene, which is the precursor of all steroids. Secondly, squalene is converted into lanosterol by the consecutive action of the squalene epoxidase erg1 and the lanosterol synthase erg7. The lanosterol 14-alpha-demethylase erg11/cyp1 catalyzes C14-demethylation of lanosterol to produce 4,4'-dimethyl cholesta-8,14,24-triene-3-beta-ol. In the next steps, a complex process involving various demethylation, reduction and desaturation reactions catalyzed by the C-14 reductase erg24 and the C-4 demethylation complex erg25-erg26-erg27 leads to the production of zymosterol. Erg28 likely functions in the C-4 demethylation complex reaction by tethering erg26 and Erg27 to the endoplasmic reticulum or to facilitate interaction between these proteins. Then, the sterol 24-C-methyltransferase erg6 catalyzes the methyl transfer from S-adenosyl-methionine to the C-24 of zymosterol to form fecosterol. The C-8 sterol isomerase erg2 catalyzes the reaction which results in unsaturation at C-7 in the B ring of sterols and thus converts fecosterol to episterol. The sterol-C5-desaturases erg31 and erg32 then catalyze the introduction of a C-5 double bond in the B ring to produce 5-dehydroepisterol. The C-22 sterol desaturase erg5 further converts 5-dehydroepisterol into ergosta-5,7,22,24(28)-tetraen-3beta-ol by forming the C-22(23) double bond in the sterol side chain. Finally, ergosta-5,7,22,24(28)-tetraen-3beta-ol is substrate of the C-24(28) sterol reductase erg4 to produce ergosterol. In the genus Schizosaccharomyces, a second route exists between lanosterol and fecosterol, via the methylation of lanosterol to eburicol by erg6, followed by C14-demethylation by erg11/cyp1 and C4-demethylation by the demethylation complex erg25-erg26-erg27. This is Squalene synthase from Schizosaccharomyces pombe (strain 972 / ATCC 24843) (Fission yeast).